Here is a 292-residue protein sequence, read N- to C-terminus: Techylectin-5A (292 aa).

The signal sequence occupies residues Met1–Ser23. Position 24 is a pyrrolidone carboxylic acid (Gln24). Positions Pro63 to Glu286 constitute a Fibrinogen C-terminal domain. A disulfide bridge links Cys72 with Cys103. Asn173, Asn198, and Asn214 each carry an N-linked (GlcNAc...) asparagine glycan. Ca(2+) is bound by residues Asp221, His225, and Thr227. A disulfide bridge connects residues Cys229 and Cys242.

As to quaternary structure, multimeric. PubMed:10468566 and PubMed:11707569 are in disagreement about the nature of the multimer, PubMed:10468566 finds hexamers and octamers, the results in PubMed:11707569 suggest tetramers. In terms of tissue distribution, strongly expressed in heart and intestine, weakly expressed in hepatopancreas. Not found in hemocytes, stomach, nervous tissue or skeletal muscle.

It localises to the secreted. Its function is as follows. Lectin involved in innate immunity. Agglutinates all types of human erythrocytes, Gram-positive and Gram-negative bacteria. Has a stronger agglutinating activity towards Gram-negative bacteria than towards Gram-positive bacteria. Specifically recognizes acetyl group-containing substances on agglutinated cells. The hemagglutinating activity was inhibited by EDTA, acetyl group-containing mono- and disaccharides, N-acetyl derivatives of amino acids, other acetyl group-containing substances, propionamide and benzamide. Enhances the antimicrobial activity of big defensin against Gram-positive bacteria but not against Gram-negative bacteria. This Tachypleus tridentatus (Japanese horseshoe crab) protein is Techylectin-5A.